Here is a 211-residue protein sequence, read N- to C-terminus: Peroxiredoxin (211 aa).

The 155-residue stretch at 2-156 (PLLGDDFPEL…ILRAVKVLQI (155 aa)) folds into the Thioredoxin domain. Cys-44 (cysteine sulfenic acid (-SOH) intermediate) is an active-site residue. Arg-119 contacts substrate. Cys-199 and Cys-205 form a disulfide bridge.

This sequence belongs to the peroxiredoxin family. Prx6 subfamily. Homodecamer. Pentamer of dimers that assemble into a ring structure.

The protein resides in the cytoplasm. The catalysed reaction is a hydroperoxide + [thioredoxin]-dithiol = an alcohol + [thioredoxin]-disulfide + H2O. Its function is as follows. Thiol-specific peroxidase that catalyzes the reduction of hydrogen peroxide and organic hydroperoxides to water and alcohols, respectively. Plays a role in cell protection against oxidative stress by detoxifying peroxides. The polypeptide is Peroxiredoxin (Chlorobaculum tepidum (strain ATCC 49652 / DSM 12025 / NBRC 103806 / TLS) (Chlorobium tepidum)).